The chain runs to 200 residues: MAKIELKPVGTNLLKSVSGESVELQSLWRDKPVVLFFLRRFGCQVCRWTAAEISKLEPDLTAHGIALVGIGPEETGLKEFKEGGFFKGDLYIDEKKQCYKDLGFKRYTALSVVPAALGKKIREVTTKAKAQGIQGNFTGDLLQSGGMLIVAKGGEKVLLHFVQDSPGDYVPLEDISKALDISANVQAGERPQCNDDVCTR.

It belongs to the peroxiredoxin-like PRXL2 family. Prostamide/prostaglandin F synthase subfamily.

Its subcellular location is the cytoplasm. The protein localises to the cytosol. It catalyses the reaction prostaglandin H2 + [thioredoxin]-dithiol = prostaglandin F2alpha + [thioredoxin]-disulfide. The catalysed reaction is prostamide F2alpha + [thioredoxin]-disulfide = prostamide H2 + [thioredoxin]-dithiol. Its function is as follows. Catalyzes the reduction of prostaglandin-ethanolamide H(2) (prostamide H(2)) to prostamide F(2alpha) with NADPH as proton donor. Also able to reduce prostaglandin H(2) to prostaglandin F(2alpha). The protein is Prostamide/prostaglandin F synthase (prxl2b) of Salmo salar (Atlantic salmon).